Consider the following 871-residue polypeptide: Alanine--tRNA ligase (871 aa).

Zn(2+) is bound by residues histidine 561, histidine 565, cysteine 662, and histidine 666.

This sequence belongs to the class-II aminoacyl-tRNA synthetase family. The cofactor is Zn(2+).

The protein resides in the cytoplasm. The catalysed reaction is tRNA(Ala) + L-alanine + ATP = L-alanyl-tRNA(Ala) + AMP + diphosphate. In terms of biological role, catalyzes the attachment of alanine to tRNA(Ala) in a two-step reaction: alanine is first activated by ATP to form Ala-AMP and then transferred to the acceptor end of tRNA(Ala). Also edits incorrectly charged Ser-tRNA(Ala) and Gly-tRNA(Ala) via its editing domain. The chain is Alanine--tRNA ligase from Dechloromonas aromatica (strain RCB).